Consider the following 79-residue polypeptide: Neurotoxin ShK-like1 (79 aa).

Positions 1–25 (MSRKLLAVLMVCTFFLIAASMGTNA) are cleaved as a signal peptide. The propeptide occupies 26–35 (LPFHEGIERR). In terms of domain architecture, ShKT spans 39–78 (CVDKMPFVCMRKDIPAICKNRNHRSYAFIMDVCRKTCGQC). Cystine bridges form between Cys-39–Cys-78, Cys-47–Cys-71, and Cys-56–Cys-75.

Expressed in nematocytes (in planulae and primary polyps). Is localized predominantly in the body column nematocytes and not in the tentacles (in primary polyps).

The protein localises to the nematocyst. It is found in the secreted. Neurotoxin. In vivo, induces contraction paralysis followed by death (within 2 hours) on zebrafish larvae. Also induces body contraction in Nematostella 11-dpf polyps. The polypeptide is Neurotoxin ShK-like1 (Nematostella vectensis (Starlet sea anemone)).